The sequence spans 768 residues: MLENKKHKKMSLSGKSLLMGTLSTAAIVLSASTVNAATNTDTVDNANASQVTTVKASASVNKNDNSGLKENATNDKVAGTETNLNSSLNSGKETSSQVNDSKEDSSSTQVGSTPISSAIINNGKASSDLNQDSDNISDHFKDNNSQGQSSTSSEKTELKGKIKEIVNNSGIDVTKLTNDQINNLNKVNFDNDPQDGTKLTLNDLDAIGQALIRRDPKYAVPYFNAKEIKNMDAAETKDAQTGKTETLEIWDSWPVQDPITGYVSNYKGYQLVIAMMGMPKKNDNHIYLLYNKYNDNEFSHWRNAGSIFGYNETPDLQEWSGSAIVNKDGSVQLFYTKNDTSNGKLNDQQLATANLKLNVDNNGVSIASVDNDHVIFIGDGKHYQTYDQFSNGKNRNRDNYTLRDPHVVEEENGDRYLVFEANTGSNNYQGEDQVYRWANYGGNDKFNVNNFLSYFGNNDDQALASVANGALGILKLSGDQNNPTVKLDDVYSPLVTSLMVSDEMERPDIVKVGNKYYLFSATRLSRGTKGEITRLANKVVGDNVAMIGFVSDSLTHGYVPLNGSGVVLTASVPANWRTATYSYYAVPIEGKENQLLITAYMTNRGEVAGKGNNSTWAPSFILQLNPDNTTTVLAKLTNQGVWVWNGDSENKNMIGSLEKDSPNSAALDGEWGKFIDWDAINSYSLKPHQPVTPNVPTTPEKPENPTTPNTPDTPRTPEVPTTPVKKTTQSELPKAGAKDGIAATILGAISSMLGVIGLAGISKRKRNN.

The first 36 residues, 1–36, serve as a signal peptide directing secretion; that stretch reads MLENKKHKKMSLSGKSLLMGTLSTAAIVLSASTVNA. Composition is skewed to polar residues over residues 57-68, 80-99, 106-134, and 143-153; these read SASVNKNDNSGL, TETNLNSSLNSGKETSSQVN, SSTQVGSTPISSAIINNGKASSDLNQDSD, and NNSQGQSSTSS. The interval 57 to 158 is disordered; that stretch reads SASVNKNDNS…SSTSSEKTEL (102 aa). 3 residues coordinate sucrose: Trp-250, Asp-251, and Ser-320. The active-site Nucleophile is Asp-251. Asp-398 contacts Ca(2+). Sucrose-binding residues include Arg-403 and Asp-404. Residues Gln-429, Asn-468, and Asp-502 each contribute to the Ca(2+) site. Glu-503 contributes to the sucrose binding site. Glu-505 acts as the Proton donor/acceptor in catalysis. A sucrose-binding site is contributed by Arg-523. The tract at residues 688 to 736 is disordered; it reads HQPVTPNVPTTPEKPENPTTPNTPDTPRTPEVPTTPVKKTTQSELPKAG. Low complexity predominate over residues 691–727; the sequence is VTPNVPTTPEKPENPTTPNTPDTPRTPEVPTTPVKKT. Residues 732–736 carry the LPXTG sorting signal motif; that stretch reads LPKAG. Position 735 is a pentaglycyl murein peptidoglycan amidated alanine (Ala-735). The propeptide at 736–768 is removed by sortase; sequence GAKDGIAATILGAISSMLGVIGLAGISKRKRNN.

The protein belongs to the glycosyl hydrolase 68 family.

It localises to the secreted. The protein localises to the cell wall. Its subcellular location is the cell surface. The catalysed reaction is [6)-beta-D-fructofuranosyl-(2-&gt;](n) alpha-D-glucopyranoside + sucrose = [6)-beta-D-fructofuranosyl-(2-&gt;](n+1) alpha-D-glucopyranoside + D-glucose. Calcium ions are required for optimal activity, but do not seem to be essential since addition of EDTA causes only a 48% drop in activity. Ca(2+) may play an important structural role and promote stability of levansucrase. Fructosyltransferase that catalyzes the polymerization of the fructose moiety of sucrose to produce levan polymer and the fructo-oligosaccharide (FOS) 1-kestose. Is also able to convert raffinose into a fructan polymer and a single oligosaccharide (most likely Gal-Glc-Frc-Frc) in vitro; however, L.gasseri strain DSM 20077 is unable to ferment raffinose. Also displays sucrose hydrolase activity. In Lactobacillus gasseri, this protein is Levansucrase.